Here is a 512-residue protein sequence, read N- to C-terminus: MKYVGSIDQGTTSTRFIIFDERQRPVSVHQVPHTQHTPHPGWLEHDPMEIFRSACKCMSVAIAKLRQKDASFRKIEAIGITNQRETTVAWDRVTKEPLCYAPVWNDLRTYDITKKVTAELGGGDSMFASKITGLPVSTYFAAFKMRWMLENVPAVADACRRGTLCFGTIDTWLMYKLSGGKAFVTDVTNASRTFLMDLRTRKWSPELCEKLKIPMETLPEIRSNSELFGYVETDECGVAAALNERTPIMGSIGDQQSALFGNMCFEKGEAKNTYGTGCFLLMNVGEEARFSKHGLLSTVGFQVGRDGPCYYALEGAIACAGATVEWMRRNMNLFSHITECEKLARSVPGTQGIVFVPAFSGLLAPYWDPSARGTIVGMTLKTTRAHVIRAALQAIALQLNDVVGSMKRDAGLNLSSLRVDGGLSKNGLLMEIQASLLGVDILVPSMHETTALGAALCAGLAAGVWTSLEEVKAVSRRENSWKTVSPSGSAMEREAMIAEWREALKRTKWAKL.

Threonine 11 contacts substrate. Arginine 15 is an ATP binding site. 3 residues coordinate substrate: arginine 84, tyrosine 139, and aspartate 254. Residues threonine 276, glycine 321, and 422–426 each bind ATP; that span reads GLSKN. The short motif at 510–512 is the Microbody targeting signal element; sequence AKL.

Belongs to the FGGY kinase family.

The protein localises to the glycosome. It catalyses the reaction glycerol + ATP = sn-glycerol 3-phosphate + ADP + H(+). Its pathway is polyol metabolism; glycerol degradation via glycerol kinase pathway; sn-glycerol 3-phosphate from glycerol: step 1/1. In terms of biological role, catalyzes the phosphorylation of glycerol using ATP. Under anoxic conditions, when glycerol 3-phosphate accumulates in the glycosome, it catalyzes the reverse reaction, maintaining the ATP balance. Key enzyme for the survival of bloodstream forms under anoxic conditions. The protein is Glycerol kinase, glycosomal (GK) of Trypanosoma brucei brucei.